We begin with the raw amino-acid sequence, 793 residues long: WASP homolog-associated protein with actin, membranes and microtubules (793 aa).

Residues M1–I253 form a mediates association with membranes region. A mediates interaction with microtubules region spans residues L254 to S623. Coiled-coil stretches lie at residues R265–D290 and L445–H503. 2 disordered regions span residues S556–G661 and E675–M699. The span at S566–A579 shows a compositional bias: basic residues. A compositionally biased stretch (polar residues) spans S618–D628. A mediates actin nucleation region spans residues G624–R793. Over residues P632–P654 the composition is skewed to pro residues. WH2 domains follow at residues S698–V716 and V728–V745. A coiled-coil region spans residues K755–E785. The disordered stretch occupies residues I772–R793. The span at D778–S787 shows a compositional bias: acidic residues. S779 bears the Phosphoserine mark.

As to quaternary structure, interacts with ACTR3; indicative for an association with the ARP2/3 complex. Associates with microtubules; in vitro binds to tubulin heterodimer in a 1:1 stoichiometry; decorates microtubules with a repeat of 80 A along protofilaments. Interacts with RHOD (in GTP-bound form).

It localises to the cytoplasm. It is found in the endoplasmic reticulum-Golgi intermediate compartment. The protein localises to the cytoplasmic vesicle membrane. Its subcellular location is the golgi apparatus. The protein resides in the cis-Golgi network. Functionally, acts as a nucleation-promoting factor (NPF) that stimulates Arp2/3-mediated actin polymerization both at the Golgi apparatus and along tubular membranes. Involved as a regulator of Golgi positioning and morphology. Its activity in membrane tubulation requires F-actin and interaction with microtubules. Proposed to use coordinated actin-nucleating and microtubule-binding activities of distinct WHAMM molecules to drive membrane tubule elongation; when MT-bound can recruit and remodel membrane vesicles but is prevented to activate the Arp2/3 complex. Required for RhoD-dependent actin reorganization such as in cell adhesion and cell migration. Participates in vesicle transport between the endoplasmic reticulum and the Golgi complex. The protein is WASP homolog-associated protein with actin, membranes and microtubules (Whamm) of Mus musculus (Mouse).